Consider the following 255-residue polypeptide: MALIEDAAFTRIKNRVGKAIAEFDLISEGDRVAVAVSGGKDSYTMLHMLETLRRRAPVRYELVAINIDSGYRGYRADIIEEHLREHGFTYHMEKTDHYDIISEKRRPNSSYCSICARLKRGTLYTLAQQYGCNKLALGHHMDDFIETLLLNQFFVGSLKAMAPSMLADNGVTTVIRPLVYVPEKEIIPFSRNNRFPVVCCCCPVCGTADLQRKKMKELLETLERDNPLVKKSLLTALSNVHPRHLLDKGLTRKPS.

Positions 37–42 (SGGKDS) match the PP-loop motif motif. Positions 112, 115, and 202 each coordinate [4Fe-4S] cluster.

Belongs to the TtcA family. In terms of assembly, homodimer. The cofactor is Mg(2+). [4Fe-4S] cluster is required as a cofactor.

The protein localises to the cytoplasm. It catalyses the reaction cytidine(32) in tRNA + S-sulfanyl-L-cysteinyl-[cysteine desulfurase] + AH2 + ATP = 2-thiocytidine(32) in tRNA + L-cysteinyl-[cysteine desulfurase] + A + AMP + diphosphate + H(+). The protein operates within tRNA modification. Catalyzes the ATP-dependent 2-thiolation of cytidine in position 32 of tRNA, to form 2-thiocytidine (s(2)C32). The sulfur atoms are provided by the cysteine/cysteine desulfurase (IscS) system. This Citrifermentans bemidjiense (strain ATCC BAA-1014 / DSM 16622 / JCM 12645 / Bem) (Geobacter bemidjiensis) protein is tRNA-cytidine(32) 2-sulfurtransferase.